A 643-amino-acid chain; its full sequence is Phosphatidylinositol-3,5-bisphosphate 3-phosphatase MTMR2 (643 aa).

A disordered region spans residues 1 to 52; that stretch reads MEKSSSCESLGAQLPAARLPSEDSLSSASTSHSENSVHTKSASAISSDSIST. 2 positions are modified to phosphoserine: serine 6 and serine 9. Residues 23–40 are compositionally biased toward polar residues; it reads DSLSSASTSHSENSVHTK. The segment covering 41–52 has biased composition (low complexity); it reads SASAISSDSIST. Serine 58 bears the Phosphoserine mark. The GRAM domain maps to 68 to 139; that stretch reads NKLAEMEEPA…GVISRVEKIG (72 aa). The Myotubularin phosphatase domain maps to 205–580; that stretch reads GWKLYDPLLE…RHLELWVGYY (376 aa). A 1,2-diacyl-sn-glycero-3-phospho-(1D-myo-inositol-3,5-bisphosphate)-binding residues include asparagine 330, asparagine 355, and isoleucine 356. Positions 330, 355, and 356 each coordinate a 1,2-diacyl-sn-glycero-3-phospho-(1D-myo-inositol-3-phosphate). Catalysis depends on cysteine 417, which acts as the Phosphocysteine intermediate. Residues serine 418, aspartate 419, glycine 420, tryptophan 421, aspartate 422, arginine 423, arginine 459, and arginine 463 each coordinate a 1,2-diacyl-sn-glycero-3-phospho-(1D-myo-inositol-3,5-bisphosphate). Serine 418, aspartate 419, glycine 420, tryptophan 421, aspartate 422, and arginine 423 together coordinate a 1,2-diacyl-sn-glycero-3-phospho-(1D-myo-inositol-3-phosphate). Arginine 463 is a binding site for a 1,2-diacyl-sn-glycero-3-phospho-(1D-myo-inositol-3-phosphate). Residues 593–627 are a coiled coil; it reads IHSRYKELLAKRAELQRKVEELQREISNRSTSSSE. A disordered region spans residues 614–643; it reads LQREISNRSTSSSERASSPAQCVTPVQTVV. Over residues 620 to 631 the composition is skewed to low complexity; the sequence is NRSTSSSERASS. Polar residues predominate over residues 632–643; the sequence is PAQCVTPVQTVV.

This sequence belongs to the protein-tyrosine phosphatase family. Non-receptor class myotubularin subfamily. Homodimer (via coiled-coil domain). Heterotetramer consisting of one MTMR2 dimer and one SBF2/MTMR13 dimer; specifically in peripheral nerves stabilizes SBF2/MTMR13 at the membranes and increases MTMR2 catalytic activity towards phosphatidylinositol 3,5-bisphosphate and to a lesser extent towards phosphatidylinositol 3-phosphate. Heterodimer with SBF1/MTMR5; acts as an adapter for the phosphatase MTMR2 to regulate MTMR2 catalytic activity and subcellular location. Heterodimer with MTMR12. Phosphorylation at Ser-58 decreases MTMR2 localization to endocytic vesicular structures. In terms of tissue distribution, expressed in sciatic nerve and in Schwann cells (at protein level). Detected in adult dorsal root ganglia, neurons of the central nervous system, motor neurons, cell soma and neurites of sensory neurons, olfactory bulb, cerebellum and hippocampus.

The protein resides in the cytoplasm. It localises to the early endosome membrane. The protein localises to the perinuclear region. Its subcellular location is the cell projection. It is found in the axon. The protein resides in the endosome membrane. It carries out the reaction a 1,2-diacyl-sn-glycero-3-phospho-(1D-myo-inositol-3,5-bisphosphate) + H2O = a 1,2-diacyl-sn-glycero-3-phospho-(1D-myo-inositol-5-phosphate) + phosphate. It catalyses the reaction a 1,2-diacyl-sn-glycero-3-phospho-(1D-myo-inositol-3-phosphate) + H2O = a 1,2-diacyl-sn-glycero-3-phospho-(1D-myo-inositol) + phosphate. The enzyme catalyses 1,2-dioctanoyl-sn-glycero-3-phospho-(1-D-myo-inositol-3-phosphate) + H2O = 1,2-dioctanoyl-sn-glycero-3-phospho-(1D-myo-inositol) + phosphate. The catalysed reaction is 1,2-dioctanoyl-sn-glycero-3-phospho-(1D-myo-inositol-3,5-bisphosphate) + H2O = 1,2-dioctanoyl-sn-glycero-3-phospho-(1D-myo-inositol-5-phosphate) + phosphate. Lipid phosphatase that specifically dephosphorylates the D-3 position of phosphatidylinositol 3-phosphate and phosphatidylinositol 3,5-bisphosphate, generating phosphatidylinositol and phosphatidylinositol 5-phosphate. Regulates the level of these phosphoinositides critical for various biological processes including autophagy initiation and autophagosome maturation. This is Phosphatidylinositol-3,5-bisphosphate 3-phosphatase MTMR2 from Mus musculus (Mouse).